Here is a 475-residue protein sequence, read N- to C-terminus: 3-keto-steroid reductase ERG27 (475 aa).

Residues Ile32, Ile55, Thr59, and Lys65 each contribute to the NADP(+) site. Active-site proton donor residues include Ser249 and Tyr272. Residues Tyr272, Lys276, Val324, and Ser326 each contribute to the NADP(+) site. The active-site Lowers pKa of active site Tyr is Lys276.

Belongs to the short-chain dehydrogenases/reductases (SDR) family. ERG27 subfamily. In terms of assembly, heterotetramer of ERG25, ERG26, ERG27 and ERG28. ERG28 acts as a scaffold to tether ERG27 and other 4,4-demethylation-related enzymes, forming a demethylation enzyme complex, in the endoplasmic reticulum.

The protein localises to the endoplasmic reticulum membrane. Its subcellular location is the lipid droplet. The protein operates within steroid metabolism; ergosterol biosynthesis. Functionally, 3-keto-steroid reductase; part of the third module of ergosterol biosynthesis pathway that includes the late steps of the pathway. ERG27 is a catalytic component of the C-4 demethylation complex that catalyzes the conversion of 4,4-dimethylfecosterol into fecosterol via 4-methylfecosterol. The third module or late pathway involves the ergosterol synthesis itself through consecutive reactions that mainly occur in the endoplasmic reticulum (ER) membrane. Firstly, the squalene synthase ERG9 catalyzes the condensation of 2 farnesyl pyrophosphate moieties to form squalene, which is the precursor of all steroids. Squalene synthase is crucial for balancing the incorporation of farnesyl diphosphate (FPP) into sterol and nonsterol isoprene synthesis. Secondly, squalene is converted into lanosterol by the consecutive action of the squalene epoxidase ERG1 and the lanosterol synthase ERG7. Then, the delta(24)-sterol C-methyltransferase ERG6 methylates lanosterol at C-24 to produce eburicol. Eburicol is the substrate of the sterol 14-alpha demethylase encoded by CYP51A, CYP51B and CYP51C, to yield 4,4,24-trimethyl ergosta-8,14,24(28)-trienol. CYP51B encodes the enzyme primarily responsible for sterol 14-alpha-demethylation, and plays an essential role in ascospore formation. CYP51A encodes an additional sterol 14-alpha-demethylase, induced on ergosterol depletion and responsible for the intrinsic variation in azole sensitivity. The third CYP51 isoform, CYP51C, does not encode a sterol 14-alpha-demethylase, but is required for full virulence on host wheat ears. The C-14 reductase ERG24 then reduces the C14=C15 double bond which leads to 4,4-dimethylfecosterol. A sequence of further demethylations at C-4, involving the C-4 demethylation complex containing the C-4 methylsterol oxidases ERG25, the sterol-4-alpha-carboxylate 3-dehydrogenase ERG26 and the 3-keto-steroid reductase ERG27, leads to the production of fecosterol via 4-methylfecosterol. ERG28 has a role as a scaffold to help anchor ERG25, ERG26 and ERG27 to the endoplasmic reticulum. The C-8 sterol isomerase ERG2 then catalyzes the reaction which results in unsaturation at C-7 in the B ring of sterols and thus converts fecosterol to episterol. The sterol-C5-desaturases ERG3A and ERG3BB then catalyze the introduction of a C-5 double bond in the B ring to produce 5-dehydroepisterol. The C-22 sterol desaturases ERG5A and ERG5B further convert 5-dehydroepisterol into ergosta-5,7,22,24(28)-tetraen-3beta-ol by forming the C-22(23) double bond in the sterol side chain. Finally, ergosta-5,7,22,24(28)-tetraen-3beta-ol is substrate of the C-24(28) sterol reductase ERG4 to produce ergosterol. The sequence is that of 3-keto-steroid reductase ERG27 from Gibberella zeae (strain ATCC MYA-4620 / CBS 123657 / FGSC 9075 / NRRL 31084 / PH-1) (Wheat head blight fungus).